Here is a 182-residue protein sequence, read N- to C-terminus: MQTDYAEVVRRTIRSVPDWPVPGVTFRDITPVLQDPRTFRALVDLFVYRYMRQRLDLVAGVDARGFILGSVLAYELNLGFVPVRKKGKLPYRTVAEEYSLEYGNATVEIHTDAVRTGQRVLLVDDLIATGGTMVAAIKLLQRLGANVVEAAAIIDLPYIGGSQHIAETGTPLYTVCQFSATD.

This sequence belongs to the purine/pyrimidine phosphoribosyltransferase family. Homodimer.

It localises to the cytoplasm. It carries out the reaction AMP + diphosphate = 5-phospho-alpha-D-ribose 1-diphosphate + adenine. Its pathway is purine metabolism; AMP biosynthesis via salvage pathway; AMP from adenine: step 1/1. Its function is as follows. Catalyzes a salvage reaction resulting in the formation of AMP, that is energically less costly than de novo synthesis. The sequence is that of Adenine phosphoribosyltransferase from Bordetella avium (strain 197N).